Here is a 602-residue protein sequence, read N- to C-terminus: Elongation factor 4 (602 aa).

One can recognise a tr-type G domain in the interval 7 to 189 (KYIRNFSIVA…AIVNKVPAPD (183 aa)). GTP is bound by residues 19–24 (DHGKST) and 136–139 (NKID).

Belongs to the TRAFAC class translation factor GTPase superfamily. Classic translation factor GTPase family. LepA subfamily.

It localises to the cell membrane. It catalyses the reaction GTP + H2O = GDP + phosphate + H(+). Functionally, required for accurate and efficient protein synthesis under certain stress conditions. May act as a fidelity factor of the translation reaction, by catalyzing a one-codon backward translocation of tRNAs on improperly translocated ribosomes. Back-translocation proceeds from a post-translocation (POST) complex to a pre-translocation (PRE) complex, thus giving elongation factor G a second chance to translocate the tRNAs correctly. Binds to ribosomes in a GTP-dependent manner. The polypeptide is Elongation factor 4 (Clostridium botulinum (strain ATCC 19397 / Type A)).